A 313-amino-acid polypeptide reads, in one-letter code: MSIINTSYVEITTFFLVGMPGLEYAHIWISIPICSMYLIAILGNGTILFIIKTEPSLHGPMYYFLSMLAMSDLGLSLSSLPTVLSIFLFNAPETSSSACFAQEFFIHGFSVLESSVLLIMSFDRFLAIHNPLRYTSILTTVRVAQIGIVFSFKSMLLVLPFPFTLRSLRYCKKNQLSHSYCLHQDVMKLACSDNRIDVIYGFFGALCLMVDFILIAVSYTLILKTVPGIASKKEELKALNTCVSHICAVIIFYLPIINLAVVHRFAGHVSPLINVLMANVLLLVPPLMKPIVYCVKTKQIRVRVVAKLCQWKI.

The Extracellular segment spans residues 1–27; that stretch reads MSIINTSYVEITTFFLVGMPGLEYAHI. A glycan (N-linked (GlcNAc...) asparagine) is linked at Asn5. Residues 28–48 form a helical membrane-spanning segment; it reads WISIPICSMYLIAILGNGTIL. The Cytoplasmic segment spans residues 49–56; the sequence is FIIKTEPS. A helical membrane pass occupies residues 57–77; the sequence is LHGPMYYFLSMLAMSDLGLSL. Residues 78-101 are Extracellular-facing; the sequence is SSLPTVLSIFLFNAPETSSSACFA. The cysteines at positions 99 and 191 are disulfide-linked. The chain crosses the membrane as a helical span at residues 102–122; the sequence is QEFFIHGFSVLESSVLLIMSF. Residues 123–141 lie on the Cytoplasmic side of the membrane; it reads DRFLAIHNPLRYTSILTTV. A helical membrane pass occupies residues 142–162; that stretch reads RVAQIGIVFSFKSMLLVLPFP. Residues 163-198 lie on the Extracellular side of the membrane; that stretch reads FTLRSLRYCKKNQLSHSYCLHQDVMKLACSDNRIDV. The chain crosses the membrane as a helical span at residues 199–218; it reads IYGFFGALCLMVDFILIAVS. Residues 219 to 238 are Cytoplasmic-facing; sequence YTLILKTVPGIASKKEELKA. Residues 239 to 259 traverse the membrane as a helical segment; the sequence is LNTCVSHICAVIIFYLPIINL. The Extracellular segment spans residues 260 to 274; it reads AVVHRFAGHVSPLIN. The chain crosses the membrane as a helical span at residues 275 to 295; that stretch reads VLMANVLLLVPPLMKPIVYCV. Topologically, residues 296–313 are cytoplasmic; that stretch reads KTKQIRVRVVAKLCQWKI.

It belongs to the G-protein coupled receptor 1 family.

The protein localises to the cell membrane. Its function is as follows. Odorant receptor. This Homo sapiens (Human) protein is Olfactory receptor 51A2 (OR51A2).